The primary structure comprises 115 residues: Ubiquitin-related modifier 1 (115 aa).

A 1-thioglycine modification is found at glycine 115. A Glycyl lysine isopeptide (Gly-Lys) (interchain with K-? in acceptor proteins) cross-link involves residue glycine 115.

The protein belongs to the URM1 family. In terms of processing, C-terminal thiocarboxylation occurs in 2 steps, it is first acyl-adenylated (-COAMP) via the hesA/moeB/thiF part of UBA4, then thiocarboxylated (-COSH) via the rhodanese domain of UBA4.

It is found in the cytoplasm. It functions in the pathway tRNA modification; 5-methoxycarbonylmethyl-2-thiouridine-tRNA biosynthesis. In terms of biological role, acts as a sulfur carrier required for 2-thiolation of mcm(5)S(2)U at tRNA wobble positions of cytosolic tRNA(Lys), tRNA(Glu) and tRNA(Gln). Serves as sulfur donor in tRNA 2-thiolation reaction by being thiocarboxylated (-COSH) at its C-terminus by the MOCS3 homolog UBA4. The sulfur is then transferred to tRNA to form 2-thiolation of mcm(5)S(2)U. Prior mcm(5) tRNA modification by the elongator complex is required for 2-thiolation. Also acts as a ubiquitin-like protein (UBL) that is covalently conjugated via an isopeptide bond to lysine residues of target proteins such as AHP1. The thiocarboxylated form serves as substrate for conjugation and oxidative stress specifically induces the formation of UBL-protein conjugates. The polypeptide is Ubiquitin-related modifier 1 (Coccidioides immitis (strain RS) (Valley fever fungus)).